We begin with the raw amino-acid sequence, 253 residues long: Large ribosomal subunit protein uL1m (253 aa).

Residues 1–81 (MSSLIALGKR…SIALKSNRRA (81 aa)) constitute a mitochondrion transit peptide.

The protein belongs to the universal ribosomal protein uL1 family. Component of the mitochondrial large ribosomal subunit (mt-LSU). Mature yeast 74S mitochondrial ribosomes consist of a small (37S) and a large (54S) subunit. The 37S small subunit contains a 15S ribosomal RNA (15S mt-rRNA) and at least 32 different proteins. The 54S large subunit contains a 21S rRNA (21S mt-rRNA) and at least 45 different proteins.

It localises to the mitochondrion. Its function is as follows. Component of the mitochondrial ribosome (mitoribosome), a dedicated translation machinery responsible for the synthesis of mitochondrial genome-encoded proteins, including at least some of the essential transmembrane subunits of the mitochondrial respiratory chain. The mitoribosomes are attached to the mitochondrial inner membrane and translation products are cotranslationally integrated into the membrane. The protein is Large ribosomal subunit protein uL1m (mrpl1) of Schizosaccharomyces pombe (strain 972 / ATCC 24843) (Fission yeast).